Here is a 257-residue protein sequence, read N- to C-terminus: Flavin-dependent thymidylate synthase (257 aa).

Positions 1–202 (MNVKLVSYTR…PRLFRYVGPN (202 aa)) constitute a ThyX domain. Residues Ser55, 79–81 (RHR), and Gln87 contribute to the FAD site. DUMP contacts are provided by residues 76–79 (QLVR), 87–91 (QMSHR), and Arg141. Residues 79 to 89 (RHRVASYTQMS) carry the ThyX motif motif. Residues 157–159 (NAR) and Asn163 contribute to the FAD site. A dUMP-binding site is contributed by Arg168. The active-site Involved in ionization of N3 of dUMP, leading to its activation is Arg168.

This sequence belongs to the thymidylate synthase ThyX family. As to quaternary structure, homotetramer. FAD serves as cofactor.

The enzyme catalyses dUMP + (6R)-5,10-methylene-5,6,7,8-tetrahydrofolate + NADPH + H(+) = dTMP + (6S)-5,6,7,8-tetrahydrofolate + NADP(+). The protein operates within pyrimidine metabolism; dTTP biosynthesis. Functionally, catalyzes the reductive methylation of 2'-deoxyuridine-5'-monophosphate (dUMP) to 2'-deoxythymidine-5'-monophosphate (dTMP) while utilizing 5,10-methylenetetrahydrofolate (mTHF) as the methyl donor, and NADPH and FADH(2) as the reductant. This chain is Flavin-dependent thymidylate synthase, found in Sulfurisphaera tokodaii (strain DSM 16993 / JCM 10545 / NBRC 100140 / 7) (Sulfolobus tokodaii).